The following is a 1055-amino-acid chain: Focal adhesion kinase 1 (1055 aa).

Residues 1–29 (MAAAYLDPNLNHTPSSSTKTHLGTGTERS) are disordered. Ala2 is modified (N-acetylalanine). Tyr5 is modified (phosphotyrosine). Residues 10 to 27 (LNHTPSSSTKTHLGTGTE) are compositionally biased toward polar residues. Thr13 carries the post-translational modification Phosphothreonine. Phosphoserine occurs at positions 29 and 54. The FERM domain occupies 35-355 (RVLKVFHYFE…GYCRLVNGAT (321 aa)). A Glycyl lysine isopeptide (Lys-Gly) (interchain with G-Cter in SUMO) cross-link involves residue Lys152. The residue at position 397 (Tyr397) is a Phosphotyrosine; by autocatalysis. Residue Tyr407 is modified to Phosphotyrosine. The region spanning 422–680 (IELGRCIGEG…ELKAQLSTIL (259 aa)) is the Protein kinase domain. Residues 428–434 (IGEGQFG), Lys454, and 500–502 (ELC) each bind ATP. Asp546 functions as the Proton acceptor in the catalytic mechanism. 2 positions are modified to phosphotyrosine: Tyr570 and Tyr576. Residue Tyr577 is modified to Phosphotyrosine; by RET and SRC. Ser580 is subject to Phosphoserine. Over residues 685–697 (VQQEERMRMESRR) the composition is skewed to basic and acidic residues. 2 disordered regions span residues 685–734 (VQQE…PSPQ) and 837–923 (VRLS…LDRS). The interaction with TGFB1I1 stretch occupies residues 707–1055 (GSDEAPPKPS…LKMLGQTRPH (349 aa)). The residue at position 722 (Ser722) is a Phosphoserine. Ser732 is subject to Phosphoserine; by CDK5. Positions 837 to 849 (VRLSRGSIDREDG) are enriched in basic and acidic residues. Phosphoserine is present on Ser843. Phosphotyrosine is present on Tyr861. Positions 869 to 880 (PAAPPKKPPRPG) are enriched in pro residues. Residues 886–896 (SNLSSISSPAE) show a composition bias toward polar residues. Phosphoserine is present on Ser913. Positions 915–1055 (PPTANLDRSN…LKMLGQTRPH (141 aa)) are interaction with ARHGEF28. Thr917 is subject to Phosphothreonine. At Tyr928 the chain carries Phosphotyrosine.

This sequence belongs to the protein kinase superfamily. Tyr protein kinase family. FAK subfamily. In terms of assembly, interacts with GIT1. Component of a complex that contains at least FER, CTTN and PTK2/FAK1. Interacts with BMX. Interacts with STEAP4. Interacts with ZFYVE21. Interacts with ESR1. Interacts with PIK3R1 or PIK3R2. Interacts with FGR, FLT4 and RET. Interacts with EPHA2 in resting cells; activation of EPHA2 recruits PTPN11, leading to dephosphorylation of PTK2/FAK1 and dissociation of the complex. Interacts with EPHA1 (kinase activity-dependent). Interacts with P53/TP53. Interacts (via first Pro-rich region) with CAS family members (via SH3 domain), including BCAR1, BCAR3, and CASS4. Interacts with NEDD9 (via SH3 domain). Interacts with TGFB1I1. Interacts with SRC, GRB2 and GRB7. Interacts with ARHGEF28. Interacts with SHB. Part of a complex composed of THSD1, PTK2/FAK1, TLN1 and VCL. Interacts with PXN and TLN1. Interacts with SORBS1. Interacts with STAT1. Interacts with WASL. Interacts with ARHGAP26 and SHC1. Interacts with RB1CC1; this inhibits PTK2/FAK1 activity and activation of downstream signaling pathways. Interacts with ARHGEF7. Interacts with MDM2. Interacts with PIAS1. Interacts with DCC. Interacts with LPXN (via LD motif 3). Interacts with MISP. Interacts with EMP2; regulates PTK2 activation and localization. Interacts with DSCAM. Interacts with AMBRA1. Interacts (when tyrosine-phosphorylated) with tensin TNS1; the interaction is increased by phosphorylation of TNS1. Post-translationally, phosphorylated on tyrosine residues upon activation, e.g. upon integrin signaling. Tyr-397 is the major autophosphorylation site, but other kinases can also phosphorylate this residue. Phosphorylation at Tyr-397 promotes interaction with SRC and SRC family members, leading to phosphorylation at Tyr-576, Tyr-577 and at additional tyrosine residues. FGR promotes phosphorylation at Tyr-397 and Tyr-576. FER promotes phosphorylation at Tyr-577, Tyr-861 and Tyr-928, even when cells are not adherent. Tyr-397, Tyr-576 and Ser-722 are phosphorylated only when cells are adherent. Phosphorylation at Tyr-397 is important for interaction with BMX, PIK3R1 and SHC1. Phosphorylation at Tyr-928 is important for interaction with GRB2. Dephosphorylated by PTPN11; PTPN11 is recruited to PTK2 via EPHA2 (tyrosine phosphorylated). Microtubule-induced dephosphorylation at Tyr-397 is crucial for the induction of focal adhesion disassembly; this dephosphorylation could be catalyzed by PTPN11 and regulated by ZFYVE21. Phosphorylation on tyrosine residues is enhanced by NTN1. In terms of processing, sumoylated; this enhances autophosphorylation.

It is found in the cell junction. The protein localises to the focal adhesion. Its subcellular location is the cell membrane. The protein resides in the cytoplasm. It localises to the perinuclear region. It is found in the cell cortex. The protein localises to the cytoskeleton. Its subcellular location is the microtubule organizing center. The protein resides in the centrosome. It localises to the nucleus. It is found in the cilium basal body. It catalyses the reaction L-tyrosyl-[protein] + ATP = O-phospho-L-tyrosyl-[protein] + ADP + H(+). Its activity is regulated as follows. Subject to autoinhibition, mediated by interactions between the FERM domain and the kinase domain. Activated by autophosphorylation at Tyr-397. This promotes interaction with SRC and phosphorylation at Tyr-576 and Tyr-577 in the kinase activation loop by SRC. Phosphorylation at Tyr-397, Tyr-576 and Tyr-577 is required for maximal kinase activity. Its function is as follows. Non-receptor protein-tyrosine kinase that plays an essential role in regulating cell migration, adhesion, spreading, reorganization of the actin cytoskeleton, formation and disassembly of focal adhesions and cell protrusions, cell cycle progression, cell proliferation and apoptosis. Required for early embryonic development and placenta development. Required for embryonic angiogenesis, normal cardiomyocyte migration and proliferation, and normal heart development. Regulates axon growth and neuronal cell migration, axon branching and synapse formation; required for normal development of the nervous system. Plays a role in osteogenesis and differentiation of osteoblasts. Functions in integrin signal transduction, but also in signaling downstream of numerous growth factor receptors, G-protein coupled receptors (GPCR), EPHA2, netrin receptors and LDL receptors. Forms multisubunit signaling complexes with SRC and SRC family members upon activation; this leads to the phosphorylation of additional tyrosine residues, creating binding sites for scaffold proteins, effectors and substrates. Regulates numerous signaling pathways. Promotes activation of phosphatidylinositol 3-kinase and the AKT1 signaling cascade. Promotes activation of MAPK1/ERK2, MAPK3/ERK1 and the MAP kinase signaling cascade. Promotes localized and transient activation of guanine nucleotide exchange factors (GEFs) and GTPase-activating proteins (GAPs), and thereby modulates the activity of Rho family GTPases. Signaling via CAS family members mediates activation of RAC1. Phosphorylates NEDD9 following integrin stimulation. Recruits the ubiquitin ligase MDM2 to P53/TP53 in the nucleus, and thereby regulates P53/TP53 activity, P53/TP53 ubiquitination and proteasomal degradation. Phosphorylates SRC; this increases SRC kinase activity. Phosphorylates ACTN1, ARHGEF7, GRB7, RET and WASL. Promotes phosphorylation of PXN and STAT1; most likely PXN and STAT1 are phosphorylated by a SRC family kinase that is recruited to autophosphorylated PTK2/FAK1, rather than by PTK2/FAK1 itself. Promotes phosphorylation of BCAR1; GIT2 and SHC1; this requires both SRC and PTK2/FAK1. Promotes phosphorylation of BMX and PIK3R1. Does not contain a kinase domain and inhibits PTK2/FAK1 phosphorylation and signaling. Its enhanced expression can attenuate the nuclear accumulation of LPXN and limit its ability to enhance serum response factor (SRF)-dependent gene transcription. This chain is Focal adhesion kinase 1, found in Rattus norvegicus (Rat).